The following is a 317-amino-acid chain: Endochitinase 3 (317 aa).

Residues 1-19 (MFVRNALVVTGLLAALTQA) form the signal peptide. 3 N-linked (GlcNAc...) asparagine glycosylation sites follow: Asn25, Asn49, and Asn169. The GH18 domain maps to 29 to 317 (HKLTVYWGAE…NYQKEIKANL (289 aa)). Catalysis depends on Glu170, which acts as the Proton donor. An N-linked (GlcNAc...) asparagine glycan is attached at Asn245.

This sequence belongs to the glycosyl hydrolase 18 family. Chitinase class III subfamily.

The protein resides in the secreted. The enzyme catalyses Random endo-hydrolysis of N-acetyl-beta-D-glucosaminide (1-&gt;4)-beta-linkages in chitin and chitodextrins.. Functionally, secreted chitinase involved in the degradation of chitin, a component of the cell walls of fungi and exoskeletal elements of some animals (including worms and arthropods). Participates in the infection process and directly acts in the penetration process of the host cuticle. Involved in heat-shock adaptation. This Metarhizium robertsii (strain ARSEF 23 / ATCC MYA-3075) (Metarhizium anisopliae (strain ARSEF 23)) protein is Endochitinase 3 (chi3).